Consider the following 223-residue polypeptide: Cytotoxic T-lymphocyte protein 4 (223 aa).

Positions 1-35 are cleaved as a signal peptide; that stretch reads MACLGFQRHKAQLNLATRTWPCTLLFFLLFIPVFC. Topologically, residues 36–161 are extracellular; sequence KAMHVAQPAV…IDPEPCPDSD (126 aa). Residues 39-140 enclose the Ig-like V-type domain; it reads HVAQPAVVLA…VELMYPPPYY (102 aa). A homodimerization region spans residues 46–50; the sequence is VLASS. 2 cysteine pairs are disulfide-bonded: Cys58-Cys129 and Cys85-Cys103. A glycan (N-linked (GlcNAc...) asparagine) is linked at Asn113. The interval 134–139 is important for interaction with CD80 and CD86; that stretch reads MYPPPY. Asn145 carries N-linked (GlcNAc...) asparagine glycosylation. A homodimerization region spans residues 150–155; the sequence is YVIDPE. Residues 162 to 182 traverse the membrane as a helical segment; the sequence is FLLWILAAVSSGLFFYSFLLT. At 183 to 223 the chain is on the cytoplasmic side; the sequence is AVSLSKMLKKRSPLTTGVYVKMPPTEPECEKQFQPYFIPIN. The residue at position 201 (Tyr201) is a Phosphotyrosine; by TXK and JAK2.

In terms of assembly, homodimer; disulfide-linked. Binds to CD80/B7-1 and CD86/B7.2. Interacts with ICOSLG. In terms of processing, N-glycosylation is important for dimerization. Phosphorylation at Tyr-201 prevents binding to the AP-2 adapter complex, blocks endocytosis, and leads to retention of CTLA4 on the cell surface. As to expression, widely expressed with highest levels in lymphoid tissues. Detected in activated T-cells where expression levels are 30- to 50-fold less than CD28, the stimulatory coreceptor, on the cell surface following activation.

It is found in the cell membrane. In terms of biological role, inhibitory receptor acting as a major negative regulator of T-cell responses. The affinity of CTLA4 for its natural B7 family ligands, CD80 and CD86, is considerably stronger than the affinity of their cognate stimulatory coreceptor CD28. The sequence is that of Cytotoxic T-lymphocyte protein 4 (CTLA4) from Homo sapiens (Human).